The sequence spans 86 residues: Large ribosomal subunit protein bL27 (86 aa).

The tract at residues 1–21 (MAHHKGGGSSRNGKDSNPQYL) is disordered.

The protein belongs to the bacterial ribosomal protein bL27 family.

In Coprothermobacter proteolyticus (strain ATCC 35245 / DSM 5265 / OCM 4 / BT), this protein is Large ribosomal subunit protein bL27.